The following is a 223-amino-acid chain: Uracil-DNA glycosylase (223 aa).

The Proton acceptor role is filled by Asp61.

This sequence belongs to the uracil-DNA glycosylase (UDG) superfamily. UNG family.

The protein resides in the cytoplasm. It catalyses the reaction Hydrolyzes single-stranded DNA or mismatched double-stranded DNA and polynucleotides, releasing free uracil.. Excises uracil residues from the DNA which can arise as a result of misincorporation of dUMP residues by DNA polymerase or due to deamination of cytosine. The polypeptide is Uracil-DNA glycosylase (Histophilus somni (strain 129Pt) (Haemophilus somnus)).